We begin with the raw amino-acid sequence, 59 residues long: Single-pass membrane and coiled-coil domain-containing protein 4 (59 aa).

A disordered region spans residues 1–27 (MRQLKGKPKKETSRDKKERKQAMQEAR). The segment covering 9–27 (KKETSRDKKERKQAMQEAR) has biased composition (basic and acidic residues). The stretch at 9–31 (KKETSRDKKERKQAMQEARRQIT) forms a coiled coil. A helical membrane pass occupies residues 32–52 (TVVLPTLAVVVLLIVVFVYVA).

This sequence belongs to the SMCO4 family.

It is found in the membrane. The sequence is that of Single-pass membrane and coiled-coil domain-containing protein 4 (SMCO4) from Bos taurus (Bovine).